The chain runs to 569 residues: Cysteine--tRNA ligase CPS1 homolog, chloroplastic/mitochondrial (569 aa).

A chloroplast and mitochondrion-targeting transit peptide spans 1-42; sequence MAAARRAAGLLPLLLSSPSRARLPHRQALALTPPLLRPHRLY. C99 is a binding site for Zn(2+). Positions 101–111 match the 'HIGH' region motif; the sequence is VTPYDDSHIGH. C279, H304, and E308 together coordinate Zn(2+). The 'KMSKS' region signature appears at 336-340; sequence KMSKS. K339 is an ATP binding site.

Belongs to the class-I aminoacyl-tRNA synthetase family. The cofactor is Zn(2+).

It localises to the plastid. It is found in the chloroplast. Its subcellular location is the mitochondrion. The enzyme catalyses tRNA(Cys) + L-cysteine + ATP = L-cysteinyl-tRNA(Cys) + AMP + diphosphate. Functionally, nuclear genome-encoded factor required for normal assembly of chloroplast polysomes. The polypeptide is Cysteine--tRNA ligase CPS1 homolog, chloroplastic/mitochondrial (Oryza sativa subsp. japonica (Rice)).